The sequence spans 429 residues: 3-phosphoshikimate 1-carboxyvinyltransferase (429 aa).

Residues Lys-20, Ser-21, and Arg-25 each coordinate 3-phosphoshikimate. A phosphoenolpyruvate-binding site is contributed by Lys-20. The phosphoenolpyruvate site is built by Gly-89 and Arg-118. Ser-164, Ser-165, Gln-166, Ser-192, Asp-311, and Lys-338 together coordinate 3-phosphoshikimate. Gln-166 lines the phosphoenolpyruvate pocket. Asp-311 serves as the catalytic Proton acceptor. Phosphoenolpyruvate contacts are provided by Arg-342 and Arg-384.

Belongs to the EPSP synthase family. Monomer.

The protein resides in the cytoplasm. It carries out the reaction 3-phosphoshikimate + phosphoenolpyruvate = 5-O-(1-carboxyvinyl)-3-phosphoshikimate + phosphate. It participates in metabolic intermediate biosynthesis; chorismate biosynthesis. Catalyzes the transfer of the enolpyruvyl moiety of phosphoenolpyruvate (PEP) to the 5-hydroxyl of shikimate-3-phosphate (S3P) to produce enolpyruvyl shikimate-3-phosphate and inorganic phosphate. The polypeptide is 3-phosphoshikimate 1-carboxyvinyltransferase (Methanococcus maripaludis (strain C7 / ATCC BAA-1331)).